An 86-amino-acid polypeptide reads, in one-letter code: YcgL domain-containing protein Smlt4554 (86 aa).

The YcgL domain occupies 1-85 (MHAYVYKSQL…SVASLMPRHY (85 aa)).

This is YcgL domain-containing protein Smlt4554 from Stenotrophomonas maltophilia (strain K279a).